The following is a 927-amino-acid chain: MAWLRLQPLTSAFLHFGLVTFVLFLNGLRAEAGDLRDVPSAGQNNESCSGSSDCKEGVILPIWYPENPSLGDKIARVIVYFVALIYMFLGVSIIADRFMASIEVITSQEREVTIKKPNGETSTTTIRVWNETVSNLTLMALGSSAPEILLSLIEVCGHGFIAGDLGPSTIVGSAAFNMFIIIGICVYVIPDGETRKIKHLRVFFVTAAWSVFAYIWLYMILAVFSPGVVQVWEGLLTLFFFPVCVLLAWVADKRLLFYKYMHKRYRTDKHRGIIIETEGEHPKGIEMDGKMMNSHFLDGNLIPLEGKEVDESRREMIRILKDLKQKHPEKDLDQLVEMANYYALSHQQKSRAFYRIQATRMMTGAGNILKKHAAEQAKKTASMSEVHTDEPEDFASKVFFDPCSYQCLENCGAVLLTVVRKGGDISKTMYVDYKTEDGSANAGADYEFTEGTVVLKPGETQKEFSVGIIDDDIFEEDEHFFVRLSNVRVEEEQLEEGMTPAILNSLPLPRAVLASPCVATVTILDDDHAGIFTFECDTIHVSESIGVMEVKVLRTSGARGTVIVPFRTVEGTAKGGGEDFEDTYGELEFKNDETVKTIRVKIVDEEEYERQENFFIALGEPKWMERGISALLLSPEVTDRKLTMEEEEAKRIAEMGKPVLGEHPKLEVIIEESYEFKSTVDKLIKKTNLALVVGTHSWRDQFMEAITVSAAGDEEEDESGEERLPSCFDYVMHFLTVFWKVLFACVPPTEYCHGWACFVVSILIIGMLTAIIGDLASHFGCTIGLKDSVTAVVFVAFGTSVPDTFASKAAALQDVYADASIGNVTGSNAVNVFLGIGLAWSVAAIYWAMQGQEFHVSAGTLAFSVTLFTIFAFVCLSVLLYRRRPHLGGELGGPRGCKLATTWLFVSLWLLYVLFATLEAYCYIKGF.

The signal sequence occupies residues 1–30 (MAWLRLQPLTSAFLHFGLVTFVLFLNGLRA). Residues 31–73 (EAGDLRDVPSAGQNNESCSGSSDCKEGVILPIWYPENPSLGDK) are Extracellular-facing. Asn45 is a glycosylation site (N-linked (GlcNAc...) asparagine). Residues 74–94 (IARVIVYFVALIYMFLGVSII) form a helical membrane-spanning segment. Residues 95-147 (ADRFMASIEVITSQEREVTIKKPNGETSTTTIRVWNETVSNLTLMALGSSAPE) lie on the Cytoplasmic side of the membrane. One copy of the Alpha-1 repeat lies at 140 to 180 (ALGSSAPEILLSLIEVCGHGFIAGDLGPSTIVGSAAFNMFI). A helical membrane pass occupies residues 148-168 (ILLSLIEVCGHGFIAGDLGPS). A topological domain (extracellular) is located at residue Thr169. A helical membrane pass occupies residues 170 to 190 (IVGSAAFNMFIIIGICVYVIP). The Cytoplasmic portion of the chain corresponds to 191-202 (DGETRKIKHLRV). A helical membrane pass occupies residues 203–223 (FFVTAAWSVFAYIWLYMILAV). The Extracellular portion of the chain corresponds to 224 to 230 (FSPGVVQ). Residues 231–251 (VWEGLLTLFFFPVCVLLAWVA) traverse the membrane as a helical segment. Topologically, residues 252-726 (DKRLLFYKYM…DESGEERLPS (475 aa)) are cytoplasmic. Positions 253–272 (KRLLFYKYMHKRYRTDKHRG) are putative calmodulin-binding region. 2 consecutive Calx-beta domains span residues 386 to 485 (VHTD…VRLS) and 519 to 619 (ATVT…IALG). Ca(2+)-binding residues include Glu409, Asp445, Asp470, Asp471, Ile473, Glu475, Glu478, Asp525, Asp526, Asp527, Glu543, Asp579, Glu606, Glu607, and Glu672. A helical membrane pass occupies residues 727 to 747 (CFDYVMHFLTVFWKVLFACVP). Topologically, residues 748-754 (PTEYCHG) are extracellular. The chain crosses the membrane as a helical span at residues 755-775 (WACFVVSILIIGMLTAIIGDL). At 776 to 778 (ASH) the chain is on the cytoplasmic side. A helical transmembrane segment spans residues 779-799 (FGCTIGLKDSVTAVVFVAFGT). Residues 796–832 (AFGTSVPDTFASKAAALQDVYADASIGNVTGSNAVNV) form an Alpha-2 repeat. Residues 800-828 (SVPDTFASKAAALQDVYADASIGNVTGSN) are Extracellular-facing. A glycan (N-linked (GlcNAc...) asparagine) is linked at Asn823. Residues 829 to 849 (AVNVFLGIGLAWSVAAIYWAM) form a helical membrane-spanning segment. Topologically, residues 850–860 (QGQEFHVSAGT) are cytoplasmic. The chain crosses the membrane as a helical span at residues 861–881 (LAFSVTLFTIFAFVCLSVLLY). The Extracellular portion of the chain corresponds to 882–903 (RRRPHLGGELGGPRGCKLATTW). A helical membrane pass occupies residues 904 to 924 (LFVSLWLLYVLFATLEAYCYI). Over 925–927 (KGF) the chain is Cytoplasmic.

It belongs to the Ca(2+):cation antiporter (CaCA) (TC 2.A.19) family. SLC8 subfamily. Interacts with AKAP1. As to expression, detected in neurons in brain cortex and hippocampus. Detected in pyramidal cell bodies and processes, in granule cells and interneurons in the CA1 and CA3 region of the hippocampus. Detected on astrocyte processes in brain cortex. Detected on endothelial cells in hippocampus capillaries (at protein level). Restricted to brain and skeletal muscle.

It localises to the cell membrane. The protein resides in the perikaryon. It is found in the cell projection. The protein localises to the dendrite. Its subcellular location is the dendritic spine. It localises to the sarcolemma. The protein resides in the cytoplasm. It is found in the sarcoplasm. The protein localises to the cell junction. Its subcellular location is the mitochondrion outer membrane. It localises to the endoplasmic reticulum membrane. The protein resides in the perinuclear region. The enzyme catalyses Ca(2+)(in) + 3 Na(+)(out) = Ca(2+)(out) + 3 Na(+)(in). With respect to regulation, calcium transport is down-regulated by Na(+) and stimulated by Ca(2+). Its function is as follows. Mediates the electrogenic exchange of Ca(2+) against Na(+) ions across the cell membrane, and thereby contributes to the regulation of cytoplasmic Ca(2+) levels and Ca(2+)-dependent cellular processes. Contributes to cellular Ca(2+) homeostasis in excitable cells, both in muscle and in brain. In a first phase, voltage-gated channels mediate the rapid increase of cytoplasmic Ca(2+) levels due to release of Ca(2+) stores from the endoplasmic reticulum. SLC8A3 mediates the export of Ca(2+) from the cell during the next phase, so that cytoplasmic Ca(2+) levels rapidly return to baseline. Contributes to Ca(2+) transport during excitation-contraction coupling in muscle. In neurons, contributes to the rapid decrease of cytoplasmic Ca(2+) levels back to baseline after neuronal activation, and thereby contributes to modulate synaptic plasticity, learning and memory. Required for normal oligodendrocyte differentiation and for normal myelination. Mediates Ca(2+) efflux from mitochondria and contributes to mitochondrial Ca(2+) ion homeostasis. This chain is Sodium/calcium exchanger 3 (Slc8a3), found in Rattus norvegicus (Rat).